The chain runs to 618 residues: Proline--tRNA ligase (618 aa).

It belongs to the class-II aminoacyl-tRNA synthetase family. ProS type 1 subfamily. As to quaternary structure, homodimer.

Its subcellular location is the cytoplasm. The enzyme catalyses tRNA(Pro) + L-proline + ATP = L-prolyl-tRNA(Pro) + AMP + diphosphate. Catalyzes the attachment of proline to tRNA(Pro) in a two-step reaction: proline is first activated by ATP to form Pro-AMP and then transferred to the acceptor end of tRNA(Pro). As ProRS can inadvertently accommodate and process non-cognate amino acids such as alanine and cysteine, to avoid such errors it has two additional distinct editing activities against alanine. One activity is designated as 'pretransfer' editing and involves the tRNA(Pro)-independent hydrolysis of activated Ala-AMP. The other activity is designated 'posttransfer' editing and involves deacylation of mischarged Ala-tRNA(Pro). The misacylated Cys-tRNA(Pro) is not edited by ProRS. This Streptococcus equi subsp. equi (strain 4047) protein is Proline--tRNA ligase.